A 236-amino-acid polypeptide reads, in one-letter code: Thrombin-like enzyme kangshuanmei (236 aa).

The region spanning 1 to 227 (VIGGDECNIN…HLDWIQSIIA (227 aa)) is the Peptidase S1 domain. Cystine bridges form between Cys7–Cys141, Cys28–Cys44, Cys78–Cys234, Cys120–Cys188, Cys152–Cys167, and Cys178–Cys203. His43 functions as the Charge relay system in the catalytic mechanism. Asn81 is a glycosylation site (N-linked (GlcNAc...) asparagine). The Charge relay system role is filled by Asp88. N-linked (GlcNAc...) asparagine glycans are attached at residues Asn99 and Asn148. Ser182 serves as the catalytic Charge relay system. The N-linked (GlcNAc...) asparagine glycan is linked to Asn229.

This sequence belongs to the peptidase S1 family. Snake venom subfamily. Monomer. N-glycosylated by units composed of Fuc, Man, GlcNAc, Gal and NeuAC residues. Expressed by the venom gland.

The protein resides in the secreted. Its activity is regulated as follows. Inhibited by 4-(2-aminoethyl)-benzensulfonyl fluoride. Not inhibited by antithrombin-III. In terms of biological role, thrombin-like snake venom serine protease. Cleaves bonds after Arg and Lys, converts fibrinogen (FGA and FGB) to fibrin and releases both fibrinopeptides A and B, and fibrinogen peptide Bbeta1-42. Has a blood clotting activity. The chain is Thrombin-like enzyme kangshuanmei from Gloydius brevicauda (Korean slamosa snake).